The sequence spans 152 residues: MNFEGKLLGQDLKIGIVVSRFNDFITGRLLDGAKDVLVRHEVESEKIDVAFVPGAFEIPLAAKKLAETGKYDAVITLGCVIRGATSHYDYVCNEVAKGVSKVSDTTGLPVIFGVLTTETIEQAVERAGTKAGNKGAEAAMAAIEMANLLKSI.

Residues Phe-21, 55–57 (AFE), and 79–81 (CVI) contribute to the 5-amino-6-(D-ribitylamino)uracil site. 84 to 85 (AT) serves as a coordination point for (2S)-2-hydroxy-3-oxobutyl phosphate. Catalysis depends on His-87, which acts as the Proton donor. Phe-112 contacts 5-amino-6-(D-ribitylamino)uracil. Arg-126 contributes to the (2S)-2-hydroxy-3-oxobutyl phosphate binding site.

The protein belongs to the DMRL synthase family. As to quaternary structure, forms an icosahedral capsid composed of 60 subunits, arranged as a dodecamer of pentamers.

The catalysed reaction is (2S)-2-hydroxy-3-oxobutyl phosphate + 5-amino-6-(D-ribitylamino)uracil = 6,7-dimethyl-8-(1-D-ribityl)lumazine + phosphate + 2 H2O + H(+). Its pathway is cofactor biosynthesis; riboflavin biosynthesis; riboflavin from 2-hydroxy-3-oxobutyl phosphate and 5-amino-6-(D-ribitylamino)uracil: step 1/2. Its function is as follows. Catalyzes the formation of 6,7-dimethyl-8-ribityllumazine by condensation of 5-amino-6-(D-ribitylamino)uracil with 3,4-dihydroxy-2-butanone 4-phosphate. This is the penultimate step in the biosynthesis of riboflavin. The protein is 6,7-dimethyl-8-ribityllumazine synthase of Staphylococcus carnosus (strain TM300).